The primary structure comprises 359 residues: Serpentine receptor class epsilon-33 (359 aa).

7 helical membrane passes run 29-49, 65-85, 134-156, 168-188, 194-214, 255-275, and 285-305; these read VIIS…VNVS, ILAL…FITI, YMYS…SVLI, PAIL…GLLF, LSAH…YVFV, LVFA…ALHY, and LIEN…MLSI.

Belongs to the nematode receptor-like protein sre family.

It is found in the membrane. This Caenorhabditis elegans protein is Serpentine receptor class epsilon-33 (sre-33).